Reading from the N-terminus, the 593-residue chain is NADH-quinone oxidoreductase subunit C/D (593 aa).

The NADH dehydrogenase I subunit C stretch occupies residues 1 to 184 (MTADNAIFIP…DPYSLTLAKQ (184 aa)). Positions 208-593 (DYMFLNLGPN…IDFVMADVDR (386 aa)) are NADH dehydrogenase I subunit D.

The protein in the N-terminal section; belongs to the complex I 30 kDa subunit family. It in the C-terminal section; belongs to the complex I 49 kDa subunit family. In terms of assembly, NDH-1 is composed of 13 different subunits. Subunits NuoB, CD, E, F, and G constitute the peripheral sector of the complex.

It is found in the cell inner membrane. It carries out the reaction a quinone + NADH + 5 H(+)(in) = a quinol + NAD(+) + 4 H(+)(out). NDH-1 shuttles electrons from NADH, via FMN and iron-sulfur (Fe-S) centers, to quinones in the respiratory chain. The immediate electron acceptor for the enzyme in this species is believed to be ubiquinone. Couples the redox reaction to proton translocation (for every two electrons transferred, four hydrogen ions are translocated across the cytoplasmic membrane), and thus conserves the redox energy in a proton gradient. This Pseudomonas putida (strain GB-1) protein is NADH-quinone oxidoreductase subunit C/D.